The chain runs to 509 residues: uncharacterized protein (509 aa).

Disordered regions lie at residues Lys112–Glu131, Asn152–Ser325, Asn365–Gly457, and Ala488–Gln509. 2 stretches are compositionally biased toward low complexity: residues Asn116–Phe127 and Lys153–Thr184. The segment covering Tyr189 to Asp217 has biased composition (acidic residues). Residues Lys228 to Thr242 show a composition bias toward polar residues. 2 stretches are compositionally biased toward low complexity: residues Asn243 to Ser325 and Asn365 to Asp397. Polar residues predominate over residues Leu398–Gln422. Residues Thr423–Asn442 show a composition bias toward low complexity. Composition is skewed to polar residues over residues Tyr443 to Gly457 and Asn496 to Gln509.

This is an uncharacterized protein from Dictyostelium discoideum (Social amoeba).